The following is a 352-amino-acid chain: Protein NDRG4 (352 aa).

Ser-298, Ser-317, and Ser-323 each carry phosphoserine. A compositionally biased stretch (low complexity) spans 314 to 323 (RTASLTSASS). The disordered stretch occupies residues 314-352 (RTASLTSASSVDGSRPQACTHSESSEGLGQVNHTMEVSC). Over residues 330 to 352 (QACTHSESSEGLGQVNHTMEVSC) the composition is skewed to polar residues.

This sequence belongs to the NDRG family. In terms of processing, phosphorylated in an aortic smooth muscle cell line, following PDGF treatment. In terms of tissue distribution, expressed predominantly in brain and heart (at protein level). In the brain, detected in astrocytes. Isoform 1 and isoform 2 are only expressed in brain. Isoform 3 is expressed in both heart and brain. Up-regulated in glioblastoma multiforme cells.

It is found in the cytoplasm. The protein localises to the cytosol. In terms of biological role, contributes to the maintenance of intracerebral BDNF levels within the normal range, which is necessary for the preservation of spatial learning and the resistance to neuronal cell death caused by ischemic stress. May enhance growth factor-induced ERK1 and ERK2 phosphorylation, including that induced by PDGF and FGF. May attenuate NGF-promoted ELK1 phosphorylation in a microtubule-dependent manner. The chain is Protein NDRG4 (NDRG4) from Homo sapiens (Human).